The sequence spans 338 residues: MKDKLEALLDQALSELAQASTEEGVQELRVKYLGKKGELTSVMKGLGALTPEERPVIGQVVNTVKSKLEEAFEVRGGEIREVVKSARLSAERIDVTLPGRRRPLGSKHPITLVTEEITSIFGALGFAVAEGPEIELDFYNFEALNLPKDHPARDMQDTFYFGESVLLRTHTSPVQIRTMLKQPPPVRIIAPGTVYRCDSDATHSPMFHQVEGLMVDKGITFGDLKGILTLFISQLFGSDIGVRLRPSFFPFTEPSAEVDIACVICRGKGCRVCKETGWLEILGAGMVDPEVYRHVGYDSELYTGFAFGMGIERIAMLKYGIADMRLLFENDLRFLKQF.

Mg(2+) is bound at residue Glu253.

It belongs to the class-II aminoacyl-tRNA synthetase family. Phe-tRNA synthetase alpha subunit type 1 subfamily. In terms of assembly, tetramer of two alpha and two beta subunits. It depends on Mg(2+) as a cofactor.

The protein resides in the cytoplasm. It catalyses the reaction tRNA(Phe) + L-phenylalanine + ATP = L-phenylalanyl-tRNA(Phe) + AMP + diphosphate + H(+). The protein is Phenylalanine--tRNA ligase alpha subunit of Citrifermentans bemidjiense (strain ATCC BAA-1014 / DSM 16622 / JCM 12645 / Bem) (Geobacter bemidjiensis).